The following is a 251-amino-acid chain: Small ribosomal subunit protein uS3 (251 aa).

Residues 39-109 (IRNYVLARLK…EVKIDVVEVI (71 aa)) form the KH type-2 domain. Residues 221–239 (EMKRMKDRRADSKSRPRDP) show a composition bias toward basic and acidic residues. Positions 221–251 (EMKRMKDRRADSKSRPRDPRSKRRRSRTKRA) are disordered. Residues 240-251 (RSKRRRSRTKRA) show a composition bias toward basic residues.

Belongs to the universal ribosomal protein uS3 family. Part of the 30S ribosomal subunit. Forms a tight complex with proteins S10 and S14.

Binds the lower part of the 30S subunit head. Binds mRNA in the 70S ribosome, positioning it for translation. This chain is Small ribosomal subunit protein uS3, found in Chlorobium limicola (strain DSM 245 / NBRC 103803 / 6330).